The sequence spans 166 residues: NAD(P)H-quinone oxidoreductase subunit I, chloroplastic (166 aa).

2 consecutive 4Fe-4S ferredoxin-type domains span residues 55–84 (GRIH…VDWK) and 95–124 (LNYS…MTEE). Residues Cys64, Cys67, Cys70, Cys74, Cys104, Cys107, Cys110, and Cys114 each coordinate [4Fe-4S] cluster.

It belongs to the complex I 23 kDa subunit family. NDH is composed of at least 16 different subunits, 5 of which are encoded in the nucleus. [4Fe-4S] cluster is required as a cofactor.

It localises to the plastid. It is found in the chloroplast thylakoid membrane. It carries out the reaction a plastoquinone + NADH + (n+1) H(+)(in) = a plastoquinol + NAD(+) + n H(+)(out). The enzyme catalyses a plastoquinone + NADPH + (n+1) H(+)(in) = a plastoquinol + NADP(+) + n H(+)(out). Functionally, NDH shuttles electrons from NAD(P)H:plastoquinone, via FMN and iron-sulfur (Fe-S) centers, to quinones in the photosynthetic chain and possibly in a chloroplast respiratory chain. The immediate electron acceptor for the enzyme in this species is believed to be plastoquinone. Couples the redox reaction to proton translocation, and thus conserves the redox energy in a proton gradient. The sequence is that of NAD(P)H-quinone oxidoreductase subunit I, chloroplastic from Marshallia caespitosa (Barbara's buttons).